Consider the following 261-residue polypeptide: Tryptophan synthase alpha chain (261 aa).

Residues Glu-49 and Asp-60 each act as proton acceptor in the active site.

This sequence belongs to the TrpA family. In terms of assembly, tetramer of two alpha and two beta chains.

The enzyme catalyses (1S,2R)-1-C-(indol-3-yl)glycerol 3-phosphate + L-serine = D-glyceraldehyde 3-phosphate + L-tryptophan + H2O. Its pathway is amino-acid biosynthesis; L-tryptophan biosynthesis; L-tryptophan from chorismate: step 5/5. In terms of biological role, the alpha subunit is responsible for the aldol cleavage of indoleglycerol phosphate to indole and glyceraldehyde 3-phosphate. The protein is Tryptophan synthase alpha chain of Leifsonia xyli subsp. xyli (strain CTCB07).